A 779-amino-acid polypeptide reads, in one-letter code: Endonuclease MutS2 (779 aa).

328–335 (GPNTGGKT) is a binding site for ATP. Residues 704 to 779 (LDLRGKRYEE…GSGATIVTLG (76 aa)) enclose the Smr domain.

This sequence belongs to the DNA mismatch repair MutS family. MutS2 subfamily. In terms of assembly, homodimer. Binds to stalled ribosomes, contacting rRNA.

Its function is as follows. Endonuclease that is involved in the suppression of homologous recombination and thus may have a key role in the control of bacterial genetic diversity. Acts as a ribosome collision sensor, splitting the ribosome into its 2 subunits. Detects stalled/collided 70S ribosomes which it binds and splits by an ATP-hydrolysis driven conformational change. Acts upstream of the ribosome quality control system (RQC), a ribosome-associated complex that mediates the extraction of incompletely synthesized nascent chains from stalled ribosomes and their subsequent degradation. Probably generates substrates for RQC. This chain is Endonuclease MutS2, found in Streptococcus pyogenes serotype M1.